We begin with the raw amino-acid sequence, 692 residues long: Elongation factor G (692 aa).

The region spanning 8 to 283 (EDYRNFGIMA…AVVDYLPSPL (276 aa)) is the tr-type G domain. GTP-binding positions include 17–24 (AHIDAGKT), 81–85 (DTPGH), and 135–138 (NKMD).

Belongs to the TRAFAC class translation factor GTPase superfamily. Classic translation factor GTPase family. EF-G/EF-2 subfamily.

The protein resides in the cytoplasm. In terms of biological role, catalyzes the GTP-dependent ribosomal translocation step during translation elongation. During this step, the ribosome changes from the pre-translocational (PRE) to the post-translocational (POST) state as the newly formed A-site-bound peptidyl-tRNA and P-site-bound deacylated tRNA move to the P and E sites, respectively. Catalyzes the coordinated movement of the two tRNA molecules, the mRNA and conformational changes in the ribosome. The protein is Elongation factor G of Caulobacter sp. (strain K31).